Reading from the N-terminus, the 494-residue chain is Alpha-amylase-related protein (494 aa).

A signal peptide spans 1-20; sequence MIKFALALTLCLAGASLSLA. Pyrrolidone carboxylic acid is present on Gln-21. A disulfide bond links Cys-48 and Cys-104. Ca(2+)-binding residues include Asn-118, Gln-169, and Asp-178. Cys-157 and Cys-171 are oxidised to a cystine. Position 206 (Arg-206) interacts with chloride. The Nucleophile role is filled by Asp-208. Ca(2+) is bound at residue His-212. Glu-245 acts as the Proton donor in catalysis. Residues Asn-308 and Arg-343 each coordinate chloride. 3 cysteine pairs are disulfide-bonded: Cys-376–Cys-382, Cys-418–Cys-441, and Cys-448–Cys-460.

The protein belongs to the glycosyl hydrolase 13 family. As to quaternary structure, monomer. Requires Ca(2+) as cofactor. Chloride serves as cofactor.

It localises to the secreted. It carries out the reaction Endohydrolysis of (1-&gt;4)-alpha-D-glucosidic linkages in polysaccharides containing three or more (1-&gt;4)-alpha-linked D-glucose units.. This chain is Alpha-amylase-related protein (Amyrel), found in Drosophila kikkawai (Fruit fly).